We begin with the raw amino-acid sequence, 202 residues long: Dephospho-CoA kinase (202 aa).

A DPCK domain is found at 6–202; sequence KVSITGDLSS…EYFYALKGAL (197 aa). 14–19 contacts ATP; sequence SSGKTE.

This sequence belongs to the CoaE family.

It is found in the cytoplasm. The enzyme catalyses 3'-dephospho-CoA + ATP = ADP + CoA + H(+). The protein operates within cofactor biosynthesis; coenzyme A biosynthesis; CoA from (R)-pantothenate: step 5/5. Catalyzes the phosphorylation of the 3'-hydroxyl group of dephosphocoenzyme A to form coenzyme A. This Chlamydia pneumoniae (Chlamydophila pneumoniae) protein is Dephospho-CoA kinase.